Here is a 244-residue protein sequence, read N- to C-terminus: Cell division protein ZapD (244 aa).

It belongs to the ZapD family. As to quaternary structure, interacts with FtsZ.

The protein resides in the cytoplasm. Functionally, cell division factor that enhances FtsZ-ring assembly. Directly interacts with FtsZ and promotes bundling of FtsZ protofilaments, with a reduction in FtsZ GTPase activity. This is Cell division protein ZapD from Shewanella sp. (strain MR-7).